The following is a 297-amino-acid chain: MEDYIKIEKIGEGTYGVVYKGRHRVTGQIVAMKKIRLESEEEGVPSTAIREISLLKELRHPNIVSLQDVLMQDSRLYLIFEFLSMDLKKYLDSIPPGQFMDSSLVKSYLHQILQGIVFCHSRRVLHRDLKPQNLLIDDKGTIKLADFGLARAFGIPIRVYTHEVVTLWYRSPEVLLGSARYSTPVDIWSIGTIFAELATKKPLFHGDSEIDQLFRIFRALGTPNNEVWPEVESLQDYKNTFPKWKPGSLASHVKNLDENGLDLLSKMLVYDPAKRISGKMALKHPYFDDLDNQIKKM.

At M1 the chain carries N-acetylmethionine. The residue at position 4 (Y4) is a Phosphotyrosine; by PKR. Positions 4 to 287 (YIKIEKIGEG…GKMALKHPYF (284 aa)) constitute a Protein kinase domain. N6-acetyllysine; alternate is present on residues K6 and K9. Glycyl lysine isopeptide (Lys-Gly) (interchain with G-Cter in SUMO2); alternate cross-links involve residues K6 and K9. 10 to 18 (IGEGTYGVV) is an ATP binding site. T14 is modified (phosphothreonine). Y15 carries the phosphotyrosine; by PKMYT1, WEE1, WEE2 and PKC/PRKCD modification. Y15 bears the Phosphotyrosine; by WEE1 and WEE2 mark. Y19 carries the phosphotyrosine modification. K20 is covalently cross-linked (Glycyl lysine isopeptide (Lys-Gly) (interchain with G-Cter in SUMO2)). K33 contributes to the ATP binding site. S39 carries the phosphoserine modification. The residue at position 77 (Y77) is a Phosphotyrosine. The active-site Proton acceptor is D128. K139 is covalently cross-linked (Glycyl lysine isopeptide (Lys-Gly) (interchain with G-Cter in SUMO2)). Residue T141 is modified to Phosphothreonine. A Phosphothreonine; by CAK modification is found at T161. At S178 the chain carries Phosphoserine. The residue at position 222 (T222) is a Phosphothreonine. K245 is modified (N6-succinyllysine). The residue at position 248 (S248) is a Phosphoserine.

It belongs to the protein kinase superfamily. CMGC Ser/Thr protein kinase family. CDC2/CDKX subfamily. Forms a stable but non-covalent complex with a regulatory subunit and with a cyclin. Interacts with cyclins-B (CCNB1, CCNB2 and CCNB3) to form a serine/threonine kinase holoenzyme complex also known as maturation promoting factor (MPF). The cyclin subunit imparts substrate specificity to the complex. Can also form CDK1-cylin-D and CDK1-cyclin-E complexes that phosphorylate RB1 in vitro. Binds to RB1 and other transcription factors such as FOXO1 and RUNX2. Promotes G2-M transition when in complex with a cyclin-B. Interacts with DLGAP5. Binds to the CDK inhibitors CDKN1A/p21 and CDKN1B/p27. Isoform 2 is unable to complex with cyclin-B1 and also fails to bind to CDKN1A/p21. Interacts with catalytically active CCNB1 and RALBP1 during mitosis to form an endocytotic complex during interphase. Associates with cyclins-A and B1 during S-phase in regenerating hepatocytes. Interacts with FANCC. Interacts with CEP63; this interaction recruits CDK1 to centrosomes. Interacts with CENPA. Interacts with NR1D1. Interacts with proteasome subunit PSMA8; to participate in meiosis progression during spermatogenesis. Phosphorylation at Thr-161 by CAK/CDK7 activates kinase activity. Phosphorylation at Thr-14 and Tyr-15 by PKMYT1 prevents nuclear translocation. Phosphorylation at Tyr-15 by WEE1 and WEE2 inhibits the protein kinase activity and acts as a negative regulator of entry into mitosis (G2 to M transition). Phosphorylation by PKMYT1 and WEE1 takes place during mitosis to keep CDK1-cyclin-B complexes inactive until the end of G2. By the end of G2, PKMYT1 and WEE1 are inactivated, but CDC25A and CDC25B are activated. Dephosphorylation by active CDC25A and CDC25B at Thr-14 and Tyr-15, leads to CDK1 activation at the G2-M transition. Phosphorylation at Tyr-15 by WEE2 during oogenesis is required to maintain meiotic arrest in oocytes during the germinal vesicle (GV) stage, a long period of quiescence at dictyate prophase I, leading to prevent meiotic reentry. Phosphorylation by WEE2 is also required for metaphase II exit during egg activation to ensure exit from meiosis in oocytes and promote pronuclear formation. Phosphorylated at Tyr-4 by PKR/EIF2AK2 upon genotoxic stress. This phosphorylation triggers CDK1 polyubiquitination and subsequent proteolysis, thus leading to G2 arrest. In response to UV irradiation, phosphorylation at Tyr-15 by PRKCD activates the G2/M DNA damage checkpoint. In terms of processing, polyubiquitinated upon genotoxic stress.

The protein resides in the nucleus. It localises to the cytoplasm. The protein localises to the mitochondrion. It is found in the cytoskeleton. Its subcellular location is the microtubule organizing center. The protein resides in the centrosome. It localises to the spindle. It carries out the reaction L-seryl-[protein] + ATP = O-phospho-L-seryl-[protein] + ADP + H(+). The catalysed reaction is L-threonyl-[protein] + ATP = O-phospho-L-threonyl-[protein] + ADP + H(+). It catalyses the reaction [DNA-directed RNA polymerase] + ATP = phospho-[DNA-directed RNA polymerase] + ADP + H(+). Phosphorylation at Thr-14 or Tyr-15 inactivates the enzyme, while phosphorylation at Thr-161 activates it. Activated through a multistep process; binding to cyclin-B is required for relocation of cyclin-kinase complexes to the nucleus, activated by CAK/CDK7-mediated phosphorylation on Thr-161, and CDC25-mediated dephosphorylation of inhibitory phosphorylation on Thr-14 and Tyr-15. Activity is restricted during S-phase in an ATR-dependent manner to prevent premature entry into G2. Repressed by the CDK inhibitors CDKN1A/p21 and CDKN1B/p27 during the G1 phase and by CDKN1A/p21 at the G1-S checkpoint upon DNA damage. Transient activation by rapid and transient dephosphorylation at Tyr-15 triggered by TGFB1. In terms of biological role, plays a key role in the control of the eukaryotic cell cycle by modulating the centrosome cycle as well as mitotic onset; promotes G2-M transition via association with multiple interphase cyclins. Phosphorylates PARVA/actopaxin, APC, AMPH, APC, BARD1, Bcl-xL/BCL2L1, BRCA2, CALD1, CASP8, CDC7, CDC20, CDC25A, CDC25C, CC2D1A, CENPA, CSNK2 proteins/CKII, FZR1/CDH1, CDK7, CEBPB, CHAMP1, DMD/dystrophin, EEF1 proteins/EF-1, EZH2, KIF11/EG5, EGFR, FANCG, FOS, GFAP, GOLGA2/GM130, GRASP1, UBE2A/hHR6A, HIST1H1 proteins/histone H1, HMGA1, HIVEP3/KRC, KAT5, LMNA, LMNB, LBR, MKI67, LATS1, MAP1B, MAP4, MARCKS, MCM2, MCM4, MKLP1, MLST8, MYB, NEFH, NFIC, NPC/nuclear pore complex, PITPNM1/NIR2, NPM1, NCL, NUCKS1, NPM1/numatrin, ORC1, PRKAR2A, EEF1E1/p18, EIF3F/p47, p53/TP53, NONO/p54NRB, PAPOLA, PLEC/plectin, RB1, TPPP, UL40/R2, RAB4A, RAP1GAP, RBBP8/CtIP, RCC1, RPS6KB1/S6K1, KHDRBS1/SAM68, ESPL1, SKI, BIRC5/survivin, STIP1, TEX14, beta-tubulins, MAPT/TAU, NEDD1, VIM/vimentin, TK1, FOXO1, RUNX1/AML1, SAMHD1, SIRT2, CGAS, ZAR1 and RUNX2. CDK1/CDC2-cyclin-B controls pronuclear union in interphase fertilized eggs. Essential for early stages of embryonic development. During G2 and early mitosis, CDC25A/B/C-mediated dephosphorylation activates CDK1/cyclin complexes which phosphorylate several substrates that trigger at least centrosome separation, Golgi dynamics, nuclear envelope breakdown and chromosome condensation. Once chromosomes are condensed and aligned at the metaphase plate, CDK1 activity is switched off by WEE1- and PKMYT1-mediated phosphorylation to allow sister chromatid separation, chromosome decondensation, reformation of the nuclear envelope and cytokinesis. Phosphorylates KRT5 during prometaphase and metaphase. Inactivated by PKR/EIF2AK2- and WEE1-mediated phosphorylation upon DNA damage to stop cell cycle and genome replication at the G2 checkpoint thus facilitating DNA repair. Reactivated after successful DNA repair through WIP1-dependent signaling leading to CDC25A/B/C-mediated dephosphorylation and restoring cell cycle progression. Catalyzes lamin (LMNA, LMNB1 and LMNB2) phosphorylation at the onset of mitosis, promoting nuclear envelope breakdown. In proliferating cells, CDK1-mediated FOXO1 phosphorylation at the G2-M phase represses FOXO1 interaction with 14-3-3 proteins and thereby promotes FOXO1 nuclear accumulation and transcription factor activity, leading to cell death of postmitotic neurons. The phosphorylation of beta-tubulins regulates microtubule dynamics during mitosis. NEDD1 phosphorylation promotes PLK1-mediated NEDD1 phosphorylation and subsequent targeting of the gamma-tubulin ring complex (gTuRC) to the centrosome, an important step for spindle formation. In addition, CC2D1A phosphorylation regulates CC2D1A spindle pole localization and association with SCC1/RAD21 and centriole cohesion during mitosis. The phosphorylation of Bcl-xL/BCL2L1 after prolongated G2 arrest upon DNA damage triggers apoptosis. In contrast, CASP8 phosphorylation during mitosis prevents its activation by proteolysis and subsequent apoptosis. This phosphorylation occurs in cancer cell lines, as well as in primary breast tissues and lymphocytes. EZH2 phosphorylation promotes H3K27me3 maintenance and epigenetic gene silencing. CALD1 phosphorylation promotes Schwann cell migration during peripheral nerve regeneration. CDK1-cyclin-B complex phosphorylates NCKAP5L and mediates its dissociation from centrosomes during mitosis. Regulates the amplitude of the cyclic expression of the core clock gene BMAL1 by phosphorylating its transcriptional repressor NR1D1, and this phosphorylation is necessary for SCF(FBXW7)-mediated ubiquitination and proteasomal degradation of NR1D1. Phosphorylates EML3 at 'Thr-881' which is essential for its interaction with HAUS augmin-like complex and TUBG1. Phosphorylates CGAS during mitosis, leading to its inhibition, thereby preventing CGAS activation by self DNA during mitosis. Phosphorylates SKA3 during mitosis which promotes SKA3 binding to the NDC80 complex and anchoring of the SKA complex to kinetochores, to enable stable attachment of mitotic spindle microtubules to kinetochores. The sequence is that of Cyclin-dependent kinase 1 (Cdk1) from Mus musculus (Mouse).